The following is a 571-amino-acid chain: Cytoplasmic polyadenylation element-binding protein 2 (571 aa).

Disordered regions lie at residues 1–23 (MSKS…NGDR) and 51–75 (FKQN…VSQE). Basic and acidic residues predominate over residues 61 to 75 (SESRHENEENKVSQE). Residues 435 to 517 (LVAFIGGVPR…KRVEIKPYFF (83 aa)) enclose the RRM domain.

Its function is as follows. Cytoplasmic polyadenylation element binding protein that binds to and regulates the translation of specific mRNAs. The chain is Cytoplasmic polyadenylation element-binding protein 2 (cpb-2) from Caenorhabditis remanei (Caenorhabditis vulgaris).